A 339-amino-acid polypeptide reads, in one-letter code: Senescence-specific cysteine protease SAG39 (339 aa).

A signal peptide spans 1 to 23 (MAMAKALLFAILGCLCLCSAVLA). 3 cysteine pairs are disulfide-bonded: Cys144–Cys187, Cys178–Cys220, and Cys276–Cys328. Residue Cys147 is part of the active site. Catalysis depends on residues His282 and Asn303.

This sequence belongs to the peptidase C1 family.

It localises to the vacuole. In terms of biological role, cysteine protease that may have a developmental senescence specific cell death function during apoptosis, heavy metal detoxification, and hypersensitive response. The chain is Senescence-specific cysteine protease SAG39 from Oryza sativa subsp. indica (Rice).